We begin with the raw amino-acid sequence, 188 residues long: Nicotinamide-nucleotide adenylyltransferase (188 aa).

Residues 166–188 (SDSLERYAATGESLPESLDDLDD) are disordered.

Belongs to the archaeal NMN adenylyltransferase family.

It is found in the cytoplasm. It carries out the reaction beta-nicotinamide D-ribonucleotide + ATP + H(+) = diphosphate + NAD(+). Its pathway is cofactor biosynthesis; NAD(+) biosynthesis; NAD(+) from nicotinamide D-ribonucleotide: step 1/1. This Haloarcula marismortui (strain ATCC 43049 / DSM 3752 / JCM 8966 / VKM B-1809) (Halobacterium marismortui) protein is Nicotinamide-nucleotide adenylyltransferase.